The primary structure comprises 156 residues: RNA pyrophosphohydrolase (156 aa).

The region spanning 6 to 148 is the Nudix hydrolase domain; it reads NYRPNVAAIV…KKNIYVKVIK (143 aa). Residues 43–64 carry the Nudix box motif; it reads GGIDKGESVKNALFRELKEEIG.

It belongs to the Nudix hydrolase family. RppH subfamily. Requires a divalent metal cation as cofactor.

Accelerates the degradation of transcripts by removing pyrophosphate from the 5'-end of triphosphorylated RNA, leading to a more labile monophosphorylated state that can stimulate subsequent ribonuclease cleavage. This chain is RNA pyrophosphohydrolase, found in Campylobacter jejuni subsp. jejuni serotype O:6 (strain 81116 / NCTC 11828).